The primary structure comprises 351 residues: Calcium uniporter protein, mitochondrial (351 aa).

A mitochondrion-targeting transit peptide spans 1–50 (MAAAAGRSLLLLLSSRGGGGGGAGGCGALTAGCFPGLGVSRHRQQQHHRT). Residues 51–233 (VHQRIASWQN…ISRKAEKRTT (183 aa)) lie on the Mitochondrial matrix side of the membrane. Residues S57 and S92 each carry the phosphoserine; by CaMK2 modification. Residues 75–165 (VTVVYQNGLP…LTYHVRPPKR (91 aa)) form an N-terminal MCU domain region. C97 is modified (S-glutathionyl cysteine). The stretch at 192-223 (IEQHQLNKERELIERLEDLKEQLAPLEKVRIE) forms a coiled coil. The chain crosses the membrane as a helical span at residues 234 to 255 (LVLWGGLAYMATQFGILARLTW). The Mitochondrial intermembrane segment spans residues 256–262 (WEYSWDI). The Selectivity filter signature appears at 260–268 (WDIMEPVTY). The chain crosses the membrane as a helical span at residues 263 to 284 (MEPVTYFITYGSAMAMYAYFVM). E264 lines the Ca(2+) pocket. Positions 285 to 290 (TRQEYV) are juxtamembrane helix. Topologically, residues 285–351 (TRQEYVYPEA…LPLRQIGEKD (67 aa)) are mitochondrial matrix. A coiled-coil region spans residues 311-339 (RFDLEKYNQLKDAIAQAEMDLKRLRDPLQ). K332 is modified (N6-acetyllysine).

The protein belongs to the MCU (TC 1.A.77) family. Homotetramer. Component of the uniplex complex, composed of MCU, EMRE/SMDT1, MICU1 and MICU2 (or MICU3) in a 4:4:1:1 stoichiometry. Interacts with CCDC109B/MCUB; this inhibits channel activity. Interacts with MCUR1. Interactions with MICU1 and MCUR1 are mutually exclusive. Interacts with SLC25A23. In terms of processing, phosphorylation by CaMK2 in heart leads to increased MCU current. The regulation of MCU by CaMK2 is however subject to discussion: another group was unable to reproduce these results. Phosphorylated on tyrosines by PTK2B/PYK2, promoting oligomerization. Post-translationally, glutathionylation at Cys-97 in response to reactive oxygen species (ROS) promotes MCU higher-order assembly, leading to constitutive activation of the MCU channel and mitochondrial calcium overload. Undergoes proteolytic degradation by SPG7.

The protein resides in the mitochondrion inner membrane. It carries out the reaction Ca(2+)(in) = Ca(2+)(out). Its activity is regulated as follows. MCU channel activity is regulated by the heterodimer composed of MICU1 and either MICU2 or MICU3, which act as calcium-sensors. At low calcium levels, MICU1 occludes the pore of the MCU channel, preventing mitochondrial calcium uptake. At higher calcium levels, calcium-binding to MICU1 and MICU2 (or MICU3) induces a conformational change that weakens MCU-MICU1 interactions and moves the MICU1-MICU2 heterodimer away from the pore, allowing calcium permeation through the channel. MCU channel activity is gated by EMRE/SMDT1 via the juxtamembrane helix loop. Inhibited by ruthenium red or its derivative Ru360. Its function is as follows. Channel-forming and calcium-conducting subunit of the mitochondrial inner membrane calcium uniporter complex (uniplex), which mediates calcium uptake into the mitochondrial matrix. MCU channel activity is regulated by the calcium-sensor subunits of the uniplex MICU1 and MICU2 (or MICU3). Mitochondrial calcium homeostasis plays key roles in cellular physiology and regulates ATP production, cytoplasmic calcium signals and activation of cell death pathways. Involved in buffering the amplitude of systolic calcium rises in cardiomyocytes. While dispensable for baseline homeostatic cardiac function, acts as a key regulator of short-term mitochondrial calcium loading underlying a 'fight-or-flight' response during acute stress: acts by mediating a rapid increase of mitochondrial calcium in pacemaker cells. Participates in mitochondrial permeability transition during ischemia-reperfusion injury. Mitochondrial calcium uptake in skeletal muscle cells is involved in muscle size in adults. Regulates synaptic vesicle endocytosis kinetics in central nerve terminal. Regulates glucose-dependent insulin secretion in pancreatic beta-cells by regulating mitochondrial calcium uptake. Involved in antigen processing and presentation. The protein is Calcium uniporter protein, mitochondrial of Homo sapiens (Human).